The primary structure comprises 5043 residues: Polyketide synthase PksJ (5043 aa).

The segment at 141-481 (AVITDRGMHQ…ELPEIETSYT (341 aa)) is adenylation 1. A Carrier 1 domain is found at 590 to 667 (RVREEIQKHL…RLASYLSEHE (78 aa)). Ser-627 carries the post-translational modification O-(pantetheine 4'-phosphoryl)serine. The condensation stretch occupies residues 690–989 (QATFQPLSEV…NMLPIRSELN (300 aa)). The adenylation 2 stretch occupies residues 1181-1578 (TYRELDEKST…EHPGILECVV (398 aa)). In terms of domain architecture, Carrier 2 spans 1654 to 1729 (TSPKNIQDTV…NISQYITEQR (76 aa)). O-(pantetheine 4'-phosphoryl)serine is present on Ser-1689. Residues 1760-2186 (DDSVAIIGIS…GTNTHAIFEQ (427 aa)) form the Ketosynthase family 3 (KS3) 1 domain. Catalysis depends on for beta-ketoacyl synthase 1 activity residues Cys-1932, His-2068, and His-2108. The tract at residues 2374-2499 (HPLLHQNTSD…GSAELASAAE (126 aa)) is N-terminal hotdog fold. The region spanning 2374–2661 (HPLLHQNTSD…TRVLEGEVHT (288 aa)) is the PKS/mFAS DH domain. The active-site Proton acceptor; for dehydratase activity is the His-2403. The tract at residues 2513–2661 (GKGKMSPDQF…TRVLEGEVHT (149 aa)) is C-terminal hotdog fold. Catalysis depends on Asp-2575, which acts as the Proton donor; for dehydratase activity. Carrier domains follow at residues 3114-3188 (RKLE…VAAY) and 3212-3286 (SSLE…TVEH). Ser-3148 and Ser-3246 each carry O-(pantetheine 4'-phosphoryl)serine. Residues 3291–3314 (VQEREKPEGQEELQTKSSEAPKIT) form a disordered region. Residues 3339–3779 (FEPVAIVGIS…GVNAHIVIEE (441 aa)) form the Ketosynthase family 3 (KS3) 2 domain. Catalysis depends on for beta-ketoacyl synthase 2 activity residues Cys-3511, His-3646, and His-3695. A coiled-coil region spans residues 3839 to 3872 (REEMDERLACVAGTMQELEEKLQAFVDGKEETDE). A Carrier 5 domain is found at 4459–4536 (GLLSETQSWL…RFADWLIGSY (78 aa)). Residue Ser-4496 is modified to O-(pantetheine 4'-phosphoryl)serine. Residues 4588–4992 (AEGIAVVGLS…GTNAHVIVEA (405 aa)) form the Ketosynthase family 3 (KS3) 3 domain. The For beta-ketoacyl synthase 3 activity role is filled by Cys-4743.

Belongs to the ATP-dependent AMP-binding enzyme family. It depends on pantetheine 4'-phosphate as a cofactor.

Its subcellular location is the cytoplasm. It participates in antibiotic biosynthesis; bacillaene biosynthesis. Functionally, involved in some intermediate steps for the synthesis of the antibiotic polyketide bacillaene which is involved in secondary metabolism. This is Polyketide synthase PksJ (pksJ) from Bacillus subtilis (strain 168).